Reading from the N-terminus, the 201-residue chain is MPVPIVIETSGRSERAYDIYSRLLKDRIILLGTPIDDQVASLICAQLLFLESENPEKEIYLYINSPGGSVTAGMAIYDTMQYITSPVATLCLGQAASMGALLLAAGAPGMRHALPNSRIMIHQPSGGFHGQASDIDIHAREVLRMKANLNEIMARHTGQPVERVADDTERDYFMGPAEAKEYGIIDSILTSRRDATQNQAK.

Serine 97 functions as the Nucleophile in the catalytic mechanism. Histidine 122 is a catalytic residue.

This sequence belongs to the peptidase S14 family. As to quaternary structure, fourteen ClpP subunits assemble into 2 heptameric rings which stack back to back to give a disk-like structure with a central cavity, resembling the structure of eukaryotic proteasomes.

The protein resides in the cytoplasm. The catalysed reaction is Hydrolysis of proteins to small peptides in the presence of ATP and magnesium. alpha-casein is the usual test substrate. In the absence of ATP, only oligopeptides shorter than five residues are hydrolyzed (such as succinyl-Leu-Tyr-|-NHMec, and Leu-Tyr-Leu-|-Tyr-Trp, in which cleavage of the -Tyr-|-Leu- and -Tyr-|-Trp bonds also occurs).. Its function is as follows. Cleaves peptides in various proteins in a process that requires ATP hydrolysis. Has a chymotrypsin-like activity. Plays a major role in the degradation of misfolded proteins. The protein is ATP-dependent Clp protease proteolytic subunit of Nitratidesulfovibrio vulgaris (strain DSM 19637 / Miyazaki F) (Desulfovibrio vulgaris).